The sequence spans 490 residues: Betaine aldehyde dehydrogenase (490 aa).

K(+) contacts are provided by Thr26, Ile27, and Asp93. 150–152 contributes to the NAD(+) binding site; sequence GAW. Lys162 serves as the catalytic Charge relay system. 176–179 contributes to the NAD(+) binding site; it reads KPSE. Val180 contacts K(+). NAD(+) is bound at residue 230–233; the sequence is GVAS. Leu246 contacts K(+). The active-site Proton acceptor is the Glu252. 3 residues coordinate NAD(+): Gly254, Cys286, and Glu387. The active-site Nucleophile is Cys286. A Cysteine sulfenic acid (-SOH) modification is found at Cys286. Residues Lys457 and Gly460 each coordinate K(+). The active-site Charge relay system is Glu464.

Belongs to the aldehyde dehydrogenase family. Dimer of dimers. It depends on K(+) as a cofactor.

The enzyme catalyses betaine aldehyde + NAD(+) + H2O = glycine betaine + NADH + 2 H(+). The protein operates within amine and polyamine biosynthesis; betaine biosynthesis via choline pathway; betaine from betaine aldehyde: step 1/1. In terms of biological role, involved in the biosynthesis of the osmoprotectant glycine betaine. Catalyzes the irreversible oxidation of betaine aldehyde to the corresponding acid. The protein is Betaine aldehyde dehydrogenase of Escherichia coli O9:H4 (strain HS).